Reading from the N-terminus, the 418-residue chain is Imidazolonepropionase (418 aa).

2 residues coordinate Fe(3+): His-79 and His-81. Positions 79 and 81 each coordinate Zn(2+). 4-imidazolone-5-propanoate is bound by residues Arg-88, Tyr-151, and His-184. Tyr-151 contacts N-formimidoyl-L-glutamate. Residue His-249 coordinates Fe(3+). A Zn(2+)-binding site is contributed by His-249. Gln-252 serves as a coordination point for 4-imidazolone-5-propanoate. Residue Asp-324 coordinates Fe(3+). Asp-324 serves as a coordination point for Zn(2+). Residues Asn-326 and Gly-328 each coordinate N-formimidoyl-L-glutamate. Thr-329 contacts 4-imidazolone-5-propanoate.

This sequence belongs to the metallo-dependent hydrolases superfamily. HutI family. The cofactor is Zn(2+). It depends on Fe(3+) as a cofactor.

It is found in the cytoplasm. The enzyme catalyses 4-imidazolone-5-propanoate + H2O = N-formimidoyl-L-glutamate. The protein operates within amino-acid degradation; L-histidine degradation into L-glutamate; N-formimidoyl-L-glutamate from L-histidine: step 3/3. In terms of biological role, catalyzes the hydrolytic cleavage of the carbon-nitrogen bond in imidazolone-5-propanoate to yield N-formimidoyl-L-glutamate. It is the third step in the universal histidine degradation pathway. The polypeptide is Imidazolonepropionase (Colwellia psychrerythraea (strain 34H / ATCC BAA-681) (Vibrio psychroerythus)).